The primary structure comprises 110 residues: Progonadoliberin-2 (110 aa).

The signal sequence occupies residues 1 to 26 (MASIGQGLVLLLLLLLLTAQPGPLKA). The disordered stretch occupies residues 25-85 (KAQHWSHGWY…KALAPPEDTV (61 aa)). Position 36 is a glycine amide (Gly36).

Belongs to the GnRH family. In terms of tissue distribution, midbrain.

The protein resides in the secreted. Stimulates the secretion of gonadotropins; it stimulates the secretion of both luteinizing and follicle-stimulating hormones. In Suncus murinus (Asian house shrew), this protein is Progonadoliberin-2 (GNRH2).